The sequence spans 595 residues: Isoprene synthase, chloroplastic (595 aa).

The transit peptide at 1-37 (MATELLCLHRPISLTHKLFRNPLPKVIQATPLTLKLR) directs the protein to the chloroplast. Aspartate 345 is a binding site for dimethylallyl diphosphate. 2 residues coordinate Mg(2+): aspartate 345 and aspartate 349. A DDXXD motif motif is present at residues 345–349 (DDIYD). Glutamate 423, arginine 486, and asparagine 489 together coordinate dimethylallyl diphosphate. Asparagine 489, serine 493, and glutamate 497 together coordinate Mg(2+).

It belongs to the terpene synthase family. Tpsb subfamily. Mg(2+) serves as cofactor. Predominantly expressed in leaves.

The protein localises to the plastid. It is found in the chloroplast. It catalyses the reaction dimethylallyl diphosphate = isoprene + diphosphate. Its pathway is terpene metabolism. In terms of biological role, lyase that catalyzes the formation of isoprene from dimethylallyl diphosphate, but not from isopentenyl diphosphate or geranyl diphosphate. The protein is Isoprene synthase, chloroplastic of Populus alba (White poplar).